Reading from the N-terminus, the 415-residue chain is Levansucrase LscA (415 aa).

Residues Trp45, Asp46, Ala132, Arg202, and Asp203 each contribute to the sucrose site. The Nucleophile role is filled by Asp46. Glu287 acts as the Proton donor/acceptor in catalysis.

This sequence belongs to the glycosyl hydrolase 68 family.

It localises to the periplasm. The enzyme catalyses [6)-beta-D-fructofuranosyl-(2-&gt;](n) alpha-D-glucopyranoside + sucrose = [6)-beta-D-fructofuranosyl-(2-&gt;](n+1) alpha-D-glucopyranoside + D-glucose. Its function is as follows. Catalyzes the synthesis of levan, a fructose polymer, by transferring the fructosyl moiety from sucrose to a growing acceptor molecule. LscA encodes a functional enzyme in vitro, when expressed in E.coli under control of the vector-based lactose promoter (Plac), and it can restore levan production to the lscB-lscC double mutant. However, lscA is not expressed in P.savastanoi pv. glycinea PG4180 under standard conditions. It could be an ancestral Lsc variant in P.syringae. In Pseudomonas savastanoi pv. glycinea (Pseudomonas syringae pv. glycinea), this protein is Levansucrase LscA.